A 501-amino-acid chain; its full sequence is Cytochrome P450 81F4 (501 aa).

Residue K245 forms a Glycyl lysine isopeptide (Lys-Gly) (interchain with G-Cter in ubiquitin) linkage. Residues 285–305 (IIIKGLMLGIMVASSETSALT) traverse the membrane as a helical segment. Heme is bound at residue C435.

This sequence belongs to the cytochrome P450 family. The cofactor is heme.

It is found in the membrane. The protein operates within secondary metabolite biosynthesis. In terms of biological role, involved in indole glucosinolate biosynthesis. Catalyzes hydroxylation reactions of the glucosinolate indole ring. Converts indol-3-yl-methylglucosinolate (I3M) to 1-hydroxy-indol-3-yl-methylglucosinolate (1OH-I3M) intermediate. This hydroxy intermediates is converted to 1-methoxy-indol-3-yl-methylglucosinolate (1MO-I3M) by indole glucosinolate methyltransferase 1 and 2 (IGMT1 and IGMT2). The protein is Cytochrome P450 81F4 of Arabidopsis thaliana (Mouse-ear cress).